A 221-amino-acid polypeptide reads, in one-letter code: Adenylate kinase (221 aa).

10-15 (GAGKGT) serves as a coordination point for ATP. The interval 30 to 59 (STGDMLRAAVKAGTPLGLEAKRFMDAGELV) is NMP. Residues Thr-31, Arg-36, 57 to 59 (ELV), 85 to 88 (GFPR), and Gln-92 contribute to the AMP site. The tract at residues 122-159 (GRRSHAASGRTYHVKFNPPKVEGVDDMTGEPLIQRDDD) is LID. ATP is bound by residues Arg-123 and 132 to 133 (TY). AMP is bound by residues Arg-156 and Arg-167. ATP is bound at residue Gly-207.

This sequence belongs to the adenylate kinase family. In terms of assembly, monomer.

Its subcellular location is the cytoplasm. The enzyme catalyses AMP + ATP = 2 ADP. It functions in the pathway purine metabolism; AMP biosynthesis via salvage pathway; AMP from ADP: step 1/1. Catalyzes the reversible transfer of the terminal phosphate group between ATP and AMP. Plays an important role in cellular energy homeostasis and in adenine nucleotide metabolism. The protein is Adenylate kinase of Paraburkholderia phytofirmans (strain DSM 17436 / LMG 22146 / PsJN) (Burkholderia phytofirmans).